Here is a 155-residue protein sequence, read N- to C-terminus: Transcriptional repressor NrdR (155 aa).

Residues 3 to 34 (CPFCGHSNTQVLDTRMSEDGDAVRRRRRCEAC) fold into a zinc finger. An ATP-cone domain is found at 49–139 (PAIVKKNGSR…VYRSFEDVSE (91 aa)).

It belongs to the NrdR family. The cofactor is Zn(2+).

Negatively regulates transcription of bacterial ribonucleotide reductase nrd genes and operons by binding to NrdR-boxes. This chain is Transcriptional repressor NrdR, found in Cupriavidus necator (strain ATCC 17699 / DSM 428 / KCTC 22496 / NCIMB 10442 / H16 / Stanier 337) (Ralstonia eutropha).